Reading from the N-terminus, the 270-residue chain is Fluoride-specific ion channel FluC 1 (270 aa).

Transmembrane regions (helical) follow at residues 4–24, 35–55, 67–87, and 96–116; these read IIIL…FIML, LDIL…TALY, IIGT…YGSV, and AFLI…VAVL. Na(+) contacts are provided by glycine 74 and serine 77.

It belongs to the fluoride channel Fluc/FEX (TC 1.A.43) family.

The protein resides in the cell inner membrane. It carries out the reaction fluoride(in) = fluoride(out). Na(+) is not transported, but it plays an essential structural role and its presence is essential for fluoride channel function. Its function is as follows. Fluoride-specific ion channel. Important for reducing fluoride concentration in the cell, thus reducing its toxicity. This Brucella abortus biovar 1 (strain 9-941) protein is Fluoride-specific ion channel FluC 1.